A 311-amino-acid chain; its full sequence is Ribosomal RNA small subunit methyltransferase H 1 (311 aa).

Residues 33–35 (AGH), aspartate 53, phenylalanine 80, aspartate 101, and glutamine 108 each bind S-adenosyl-L-methionine.

The protein belongs to the methyltransferase superfamily. RsmH family.

Its subcellular location is the cytoplasm. It carries out the reaction cytidine(1402) in 16S rRNA + S-adenosyl-L-methionine = N(4)-methylcytidine(1402) in 16S rRNA + S-adenosyl-L-homocysteine + H(+). Its function is as follows. Specifically methylates the N4 position of cytidine in position 1402 (C1402) of 16S rRNA. This Alkaliphilus metalliredigens (strain QYMF) protein is Ribosomal RNA small subunit methyltransferase H 1.